Reading from the N-terminus, the 453-residue chain is MNIVILAAGTGKRMRSALPKVLHPLAGRPLLSHVIATARTLQPSRLVVVVGHGAEQVQAAVAAPDVQFAVQAEQLGTGHAVRQALPLLDPAQPTLVLYGDVPLTRATTLKRLVDAAHDGRYGILTVTLDDPTGYGRIVRDAAGFVTRIVEQKDASPEQLKIAEINTGIIVTPTAQLSMWLGALKNENAQGEYYLTDVVELAIEAGFEIVTTQPDDDWETLGVNSKAQLAELERIHQRNVADALLVEGVTLADPARVDVRGTLRCGRDVSIDVNCVFEGDVTLADDVTVGPNCVIRNASIGAGTRIDAFTHIDGAQLGANTVIGPYARLRPGAQLADEAHVGNFVEVKNAVIGHGSKANHLTYIGDADIGARVNIGAGTITCNYDGANKFRTVIEDDVFVGSDTQLVAPVRVGRGVTIAAGTTVWKDVAEGTLALNEKTQTAKSGYVRPVKKKS.

Residues 1–225 (MNIVILAAGT…DWETLGVNSK (225 aa)) form a pyrophosphorylase region. Residues 6 to 9 (LAAG), Lys20, Gln71, 76 to 77 (GT), 98 to 100 (YGD), Gly135, Glu150, Asn165, and Asn223 contribute to the UDP-N-acetyl-alpha-D-glucosamine site. A Mg(2+)-binding site is contributed by Asp100. Asn223 contributes to the Mg(2+) binding site. The interval 226-246 (AQLAELERIHQRNVADALLVE) is linker. Residues 247–453 (GVTLADPARV…GYVRPVKKKS (207 aa)) form an N-acetyltransferase region. Residues Arg329 and Lys347 each coordinate UDP-N-acetyl-alpha-D-glucosamine. Catalysis depends on His359, which acts as the Proton acceptor. UDP-N-acetyl-alpha-D-glucosamine-binding residues include Tyr362 and Asn373. Residues Ala376, 382–383 (NY), Ser401, and Ala419 contribute to the acetyl-CoA site.

This sequence in the N-terminal section; belongs to the N-acetylglucosamine-1-phosphate uridyltransferase family. The protein in the C-terminal section; belongs to the transferase hexapeptide repeat family. In terms of assembly, homotrimer. It depends on Mg(2+) as a cofactor.

The protein resides in the cytoplasm. The enzyme catalyses alpha-D-glucosamine 1-phosphate + acetyl-CoA = N-acetyl-alpha-D-glucosamine 1-phosphate + CoA + H(+). It catalyses the reaction N-acetyl-alpha-D-glucosamine 1-phosphate + UTP + H(+) = UDP-N-acetyl-alpha-D-glucosamine + diphosphate. It functions in the pathway nucleotide-sugar biosynthesis; UDP-N-acetyl-alpha-D-glucosamine biosynthesis; N-acetyl-alpha-D-glucosamine 1-phosphate from alpha-D-glucosamine 6-phosphate (route II): step 2/2. Its pathway is nucleotide-sugar biosynthesis; UDP-N-acetyl-alpha-D-glucosamine biosynthesis; UDP-N-acetyl-alpha-D-glucosamine from N-acetyl-alpha-D-glucosamine 1-phosphate: step 1/1. It participates in bacterial outer membrane biogenesis; LPS lipid A biosynthesis. Functionally, catalyzes the last two sequential reactions in the de novo biosynthetic pathway for UDP-N-acetylglucosamine (UDP-GlcNAc). The C-terminal domain catalyzes the transfer of acetyl group from acetyl coenzyme A to glucosamine-1-phosphate (GlcN-1-P) to produce N-acetylglucosamine-1-phosphate (GlcNAc-1-P), which is converted into UDP-GlcNAc by the transfer of uridine 5-monophosphate (from uridine 5-triphosphate), a reaction catalyzed by the N-terminal domain. This Burkholderia vietnamiensis (strain G4 / LMG 22486) (Burkholderia cepacia (strain R1808)) protein is Bifunctional protein GlmU.